The chain runs to 450 residues: Putative zinc metalloprotease PA3649 (450 aa).

His-21 contacts Zn(2+). Glu-22 is a catalytic residue. His-25 contributes to the Zn(2+) binding site. The chain crosses the membrane as a helical span at residues 97 to 119; that stretch reads IAIVAAGPIANFLLAILFFWVVA. In terms of domain architecture, PDZ spans 199–291; the sequence is GWLKGEDNPD…VLDVALELAV (93 aa). Residues 425-444 traverse the membrane as a helical segment; the sequence is AWGMQIGISLVVGVMLLALV.

The protein belongs to the peptidase M50B family. Requires Zn(2+) as cofactor.

It localises to the cell inner membrane. This Pseudomonas aeruginosa (strain ATCC 15692 / DSM 22644 / CIP 104116 / JCM 14847 / LMG 12228 / 1C / PRS 101 / PAO1) protein is Putative zinc metalloprotease PA3649.